An 81-amino-acid chain; its full sequence is Photosystem I iron-sulfur center (81 aa).

4Fe-4S ferredoxin-type domains follow at residues 2 to 31 (AHSVKIYDTCIGCTQCVRACPTDVLEMIPW) and 39 to 68 (IASAPRTEDCVGCKRCESACPTDFLSVRVY). Cys11, Cys14, Cys17, Cys21, Cys48, Cys51, Cys54, and Cys58 together coordinate [4Fe-4S] cluster.

The eukaryotic PSI reaction center is composed of at least 11 subunits. Requires [4Fe-4S] cluster as cofactor.

It localises to the plastid. It is found in the chloroplast thylakoid membrane. The catalysed reaction is reduced [plastocyanin] + hnu + oxidized [2Fe-2S]-[ferredoxin] = oxidized [plastocyanin] + reduced [2Fe-2S]-[ferredoxin]. In terms of biological role, apoprotein for the two 4Fe-4S centers FA and FB of photosystem I (PSI); essential for photochemical activity. FB is the terminal electron acceptor of PSI, donating electrons to ferredoxin. The C-terminus interacts with PsaA/B/D and helps assemble the protein into the PSI complex. Required for binding of PsaD and PsaE to PSI. PSI is a plastocyanin-ferredoxin oxidoreductase, converting photonic excitation into a charge separation, which transfers an electron from the donor P700 chlorophyll pair to the spectroscopically characterized acceptors A0, A1, FX, FA and FB in turn. This Adiantum capillus-veneris (Maidenhair fern) protein is Photosystem I iron-sulfur center.